Reading from the N-terminus, the 263-residue chain is Endonuclease 8 (263 aa).

The active-site Schiff-base intermediate with DNA is the Pro2. The Proton donor role is filled by Glu3. Lys53 functions as the Proton donor; for beta-elimination activity in the catalytic mechanism. Residues Gln70, Arg125, and Asn169 each coordinate DNA. An FPG-type zinc finger spans residues 229-263 (KVFHRDGEACERCGGIIEKTTLSSRPFYWCAHCQK). The active-site Proton donor; for delta-elimination activity is the Arg253.

Belongs to the FPG family. It depends on Zn(2+) as a cofactor.

The enzyme catalyses 2'-deoxyribonucleotide-(2'-deoxyribose 5'-phosphate)-2'-deoxyribonucleotide-DNA = a 3'-end 2'-deoxyribonucleotide-(2,3-dehydro-2,3-deoxyribose 5'-phosphate)-DNA + a 5'-end 5'-phospho-2'-deoxyribonucleoside-DNA + H(+). Involved in base excision repair of DNA damaged by oxidation or by mutagenic agents. Acts as a DNA glycosylase that recognizes and removes damaged bases. Has a preference for oxidized pyrimidines, such as thymine glycol, 5,6-dihydrouracil and 5,6-dihydrothymine. Has AP (apurinic/apyrimidinic) lyase activity and introduces nicks in the DNA strand. Cleaves the DNA backbone by beta-delta elimination to generate a single-strand break at the site of the removed base with both 3'- and 5'-phosphates. The sequence is that of Endonuclease 8 from Salmonella typhi.